Here is a 121-residue protein sequence, read N- to C-terminus: Large ribosomal subunit protein uL18 (121 aa).

The protein belongs to the universal ribosomal protein uL18 family. Part of the 50S ribosomal subunit; part of the 5S rRNA/L5/L18/L25 subcomplex. Contacts the 5S and 23S rRNAs.

Its function is as follows. This is one of the proteins that bind and probably mediate the attachment of the 5S RNA into the large ribosomal subunit, where it forms part of the central protuberance. This is Large ribosomal subunit protein uL18 from Paraburkholderia xenovorans (strain LB400).